A 1348-amino-acid polypeptide reads, in one-letter code: Putative late blight resistance protein homolog R1B-12 (1348 aa).

Coiled coils occupy residues 446 to 469 (RYSD…ESLQ) and 561 to 583 (PRMN…KLLN). Positions 552–848 (RTSSQLTRTP…ISESFIKSCE (297 aa)) constitute an NB-ARC domain. Residue 595–602 (GMPGLGKT) participates in ATP binding. LRR repeat units follow at residues 977 to 1001 (FKFL…LLYL), 1051 to 1074 (LRHL…SAKL), 1123 to 1147 (PITL…ISAQ), 1151 to 1170 (YLKL…TADH), 1171 to 1194 (LKHL…EVSN), 1197 to 1219 (FPQL…ADDA), 1220 to 1244 (FPNL…FMDI), and 1309 to 1332 (LPGI…DMDA). The 65-residue stretch at 1284–1348 (VKKMVLKFDT…VGKLINRGML (65 aa)) folds into the HMA domain.

Belongs to the disease resistance NB-LRR family.

Its subcellular location is the cytoplasm. It localises to the membrane. Functionally, confers resistance to late blight (Phytophthora infestans) races carrying the avirulence gene Avr1. Resistance proteins guard the plant against pathogens that contain an appropriate avirulence protein via an indirect interaction with this avirulence protein. That triggers a defense system including the hypersensitive response, which restricts the pathogen growth. The polypeptide is Putative late blight resistance protein homolog R1B-12 (R1B-12) (Solanum demissum (Wild potato)).